Here is a 208-residue protein sequence, read N- to C-terminus: MAVIEVKHPLIEHKITNIRDVNTDTKSFKENLAEISSLILYEATKQLELQEVEVETPLTKTKAYRLSDSSLAVVPILRAGLGMVDGVMSLIPNARIGHIGVYRDEETLEPKHYYCKLPEDIAKRSVFLVDPMLATGGSAIYAIDYLKSQGVPKVTFLCILAAPEGIKAVTTAHPDVDIFIAKIDERLTEHGYIFPGLGDAGDRVFGTK.

5-phospho-alpha-D-ribose 1-diphosphate-binding positions include Arg-78, Arg-103, and 130 to 138 (DPMLATGGS). Uracil is bound by residues Ile-193 and 198–200 (GDA). Asp-199 provides a ligand contact to 5-phospho-alpha-D-ribose 1-diphosphate.

The protein belongs to the UPRTase family. It depends on Mg(2+) as a cofactor.

The catalysed reaction is UMP + diphosphate = 5-phospho-alpha-D-ribose 1-diphosphate + uracil. Its pathway is pyrimidine metabolism; UMP biosynthesis via salvage pathway; UMP from uracil: step 1/1. Allosterically activated by GTP. Its function is as follows. Catalyzes the conversion of uracil and 5-phospho-alpha-D-ribose 1-diphosphate (PRPP) to UMP and diphosphate. The sequence is that of Uracil phosphoribosyltransferase from Wolinella succinogenes (strain ATCC 29543 / DSM 1740 / CCUG 13145 / JCM 31913 / LMG 7466 / NCTC 11488 / FDC 602W) (Vibrio succinogenes).